The primary structure comprises 550 residues: Leiomodin-2 (550 aa).

Residues 1-47 form an interaction with tropomyosin alpha region; that stretch reads MSTFGYRRGLSKYESIDEDELLASLSPEELKELERELEDIEPDRNLP. 3 interaction with actin regions span residues 1-165, 166-500, and 524-543; these read MSTF…TDNS, KPKT…KEIK, and VHENLMEAIRGSSIRQLRRV. Ser-11, Ser-15, and Ser-24 each carry phosphoserine. Residues 84-94 are compositionally biased toward basic and acidic residues; the sequence is ERLGECGKVAE. 2 disordered regions span residues 84-202 and 359-527; these read ERLG…PCGN and MDKQ…VHEN. Residues 91–147 adopt a coiled-coil conformation; the sequence is KVAEEDKEESEEELIFTESNSEVSEEVCTEDEEESQEEEEDSEEEEDSEEEEETTEA. 2 stretches are compositionally biased toward acidic residues: residues 95-105 and 113-145; these read EDKEESEEELI and VSEEVCTEDEEESQEEEEDSEEEEDSEEEEETT. Polar residues-rich tracts occupy residues 151–164 and 170–193; these read INGTVSYNSVNTDN and FKSQIENINLTNGNSGRTQRNSES. A compositionally biased stretch (basic and acidic residues) spans 359–377; it reads MDKQRQKRMQEQKQQEGHD. Residues 391–402 show a composition bias toward polar residues; that stretch reads TPGSSPYASPRQ. Ser-407 is modified (phosphoserine). The span at 421 to 452 shows a compositional bias: pro residues; sequence PPSPVAPPPPPPPPPLPPHMLPPPPPPPAPPL. Residues 468 to 479 are compositionally biased toward polar residues; sequence QQESAQRALQNG. Positions 480-490 are enriched in basic residues; sequence QRKKKGKKVKK. Residues 497–515 are compositionally biased toward basic and acidic residues; the sequence is KEIKNSLRSVQEKKMEDSS. In terms of domain architecture, WH2 spans 524–543; it reads VHENLMEAIRGSSIRQLRRV.

This sequence belongs to the tropomodulin family. In terms of assembly, can bind at least three actin monomers and thereby provides a nucleus for actin filament formation. Interacts (via N-terminus) with tropomyosin alpha (TPM1) (via N-terminus). May also interact with TPM2 (via N-terminus). Interacts with FLII. As to expression, detected in neonate heart (at protein level). Detected in embryonic heart and in pharyngeal arches. Detected in adult heart.

The protein resides in the cytoplasm. It localises to the myofibril. Its subcellular location is the sarcomere. It is found in the m line. The protein localises to the cytoskeleton. In terms of biological role, mediates nucleation of actin filaments and thereby promotes actin polymerization. Plays a role in the regulation of actin filament length. Required for normal sarcomere organization in the heart, and for normal heart function. This chain is Leiomodin-2 (Lmod2), found in Mus musculus (Mouse).